The chain runs to 501 residues: TNF receptor-associated factor 2 (501 aa).

Ala2 is modified (N-acetylalanine). The residue at position 5 (Ser5) is a Phosphoserine. Thr7 carries the phosphothreonine modification. Ser11 bears the Phosphoserine mark. At Thr22 the chain carries Phosphothreonine. A Glycyl lysine isopeptide (Lys-Gly) (interchain with G-Cter in ubiquitin) cross-link involves residue Lys31. An RING-type zinc finger spans residues 34–73 (CSACRNVLRRPFQAQCGHRYCSFCLASILSSGPQNCAACV). The residue at position 117 (Thr117) is a Phosphothreonine; by PKC. 2 TRAF-type zinc fingers span residues 124–180 (CHEG…AHHE) and 177–233 (AHHE…EKQQ). The segment at 283–293 (ENIVCVLNREV) is important for interaction with BIRC2 and BIRC3. Residues 299–348 (TAEACSRQHRLDQDKIEALSSKVQQLERSIGLKDLAMADLEQKVLEMEAS) adopt a coiled-coil conformation. A Glycyl lysine isopeptide (Lys-Gly) (interchain with G-Cter in ubiquitin) cross-link involves residue Lys320. The region spanning 351-496 (DGVFIWKISD…DDAIFIKAIV (146 aa)) is the MATH domain.

This sequence belongs to the TNF receptor-associated factor family. A subfamily. Homotrimer. Heterotrimer with TRAF1. Heterotrimer with TRAF3 (via TRAF domain). The domain containing the RING-type and the first TRAF-type zinc finger can also form homodimers (in vitro). Interacts with TNFRSF1B/TNFR2. Interacts with TNFRSF5/CD40. Interacts with TNFRSF4, TNFRSF7/CD27, TNFRSF8/CD30, TNFRSF9/CD137, TNFRSF11A/RANK, TNFRSF13B/TACI, TNFRSF14, TNFRSF16/NGFR, TNFRSF17/BCMA, TNFRSF18/AITR, TNFRSF19/TROY, TNFRSF19L/RELT and EDAR. Stimulation of TNF-alpha receptor TNFRSF1A leads to the formation of two distinct signaling complexes. Plasma membrane-bound complex I is composed of TNFRSF1A, TRADD, RIPK1, TRAF2 and BIRC2/c-IAP1 or BIRC3 which interacts with CHUCK/IKK-alpha, IKBKB/IKK-beta and IKBKG/IKK-gamma promoting cell survival. Subsequently, TRADD, RIPK1 and TRAF2 dissociate from TNFRSF1A and form cytoplasmic complex II with FADD and caspase CASP8 promoting cell apoptosis. Interacts with TRADD. Identified in a complex with TNFRSF1A, RIPK1 and IKBKB/IKK-beta. Interacts with RIPK2. Interacts with BIRC2 and BIRC3 N-terminus; a single BIRC2 or BIRC3 molecule interacts with a heterotrimer formed by TRAF1 and TRAF2, or a TRAF2 homotrimer. Identified in a complex composed of TRAF2, TRAF3, BIRC2 and BIRC3. Interacts with BIRC2; the interaction promotes BIRC2 stability. Interaction with BIRC2 and/or BIRC3 is essential for ubiquitination of IKBKE, degradation of NFKBIA and activation of NF-kappa-B. Within complex I, phosphorylated TRAF2 interacts (via 'Lys-63'-linked polyubiquitin chains) with CHUCK/IKK-alpha, IKBKB/IKK-beta, IKBKG/IKK-gamma TAB2, TAB3 and TAK1 in response to TNF-alpha stimulation. Within complex I, interacts with UXT isoform 1 (via TPQE motif); the interaction prevents the recruitment of FADD and CASP8/caspase 8 to complex I. Forms a complex composed of TNFRSF8/CD30 or TNFRSF1B/TNFR2, and TRAF1, TRAF2 and E3 ligase TRAIP. Within the complex, interacts with TRAIP; the interaction inhibits TRAF2-mediated NF-kappa B activation. Component of a complex composed of TANK and TBK1. Interacts with TRPC4AP. Interacts with MAP3K1/MEKK1, MAP3K5/ASK1 and MAP3K11/MLK3 in response to TNF-alpha stimulation; the interaction leads to JNK activation and interaction with MAP3K5 is inhibited by PRMT1. Component of a complex composed of MAP3K14/NIK BIRC3 and TRAF3; the interaction leads to BIRC2/3-mediated ubiquitination of TRAF3 upon CD40 engagement in a TRAF2-dependent manner. Interacts with MAP3K14/NIK in response to TNF-alpha stimulation; the interaction leads to NF-kappa B activation. Interacts with PEG3; the interaction may promote TRAF2-mediated NF-kappa B activation. Interacts with HIVEP3; the interaction may inhibit TNF-alpha-TRAF2-mediated NF-kappa B and JNK activation. Interacts with TANK/ITRAF; the interaction prevents interaction between TNFRSF1B/TNFR2 and TRAF2. Interacts with deubiquitinating enzyme CYLD; the interaction results in the deubiquitination and inactivation of TRAF2. Interacts with SIAH2; the interaction leads to TRAF2 ubiquitination and degradation. Interacts with E2 conjugating enzyme UBE2N/Ubc13, E3 ligase ITCH and RNF11 in response to TNF-alpha stimulation. Interacts with ubiquitin-editing enzyme TNFAIP3/A20 in response to TNF-alpha stimulation; the interaction promotes TRAF2 dissociation from UBE2N/Ubc13, ITCH, RNF11 and TAX1BP1 and prevents prolonged TRAF-2 ubiquitination. Interacts with TAX1BP1 in response to TNF-alpha stimulation; the interaction promotes TRAF2 dissociation from UBE2N/Ubc13 and TNFAIP3/A20, and prevents prolonged TRAF-2 ubiquitination. Interacts (via C-terminus) with EIF2AK2/PKR (via the kinase catalytic domain). Interacts with deubiquitinating enzyme USP48. Interacts with PTPN2; probably involved in TNF-mediated signaling. Interacts with Toll-like receptor TLR4/3 adapter TICAM1/TRIF; the interaction may promote TICAM1 ubiquitination. Interacts with kinase/endoribonuclease ERN1/IRE1 and DAB2IP in response to ER stress; the interaction requires DAB2IP. Interacts with ERN1/IRE1 and TAOK3 in response to ER stress; the interaction may promote TRAF2 phosphorylation. Interacts (via zinc fingers) with DAB2IP (via C-terminus PER domain)in response to TNF-alpha stimulation. Interacts with CASP8AP2/FLASH. Interacts with NFATC2IP; the interaction may repress IL-4 production in T cells. Interacts with kinase CDK9. Interacts with sphingosine kinase 1 SPHK1. Interacts with kinase TNIK. Interacts with TRAFD1. Interacts with DNA phosphodiesterase TDP2. Interacts with MAVS/IPS1. Interacts with CARD14. Interacts with Epstein-Barr virus LMP1/BNFL1. Interacts with GPS2. Interacts with XPNPEP3. Interacts with RIPK3. Interacts with RELL2. Interacts with LRRC19. Interacts with GAPDH; promoting TRAF2 ubiquitination. In terms of processing, phosphorylated at several serine residues within the first 128 amino acid residues. Phosphorylated at Thr-117 in response to signaling via TNF and TNFRSF1A. Phosphorylation at Thr-117 is required for 'Lys-63'-linked polyubiquitination, but not for 'Lys-48'-linked polyubiquitination. Phosphorylation at Thr-117 is important for interaction with IKKA and IKKB, activation of IKK and subsequent activation of NF-kappa-B. Undergoes both 'Lys-48'-linked and 'Lys-63'-linked polyubiquitination. Polyubiquitinated via 'Lys-63'-linked ubiquitin in response to TNF signaling; this requires prior phosphorylation at Thr-117. 'Lys-63'-linked polyubiquitination promotes TRAF2-mediated activation of NF-kappa-B. Can be polyubiquitinated at several Lys residues via 'Lys-48'-linked ubiquitin chains in response to TNF signaling, leading to proteasomal degradation. Autoubiquitinated, leading to its subsequent proteasomal degradation. Polyubiquitinated by BIRC2 and SIAH2, leading to its subsequent proteasomal degradation. Deubiquitinated by CYLD, a protease that specifically cleaves 'Lys-63'-linked polyubiquitin chains. Ubiquination is inhibited by LRRC19; inhibits proteasomal degradation. Ubiquitinated at Lys-320 by the SCF(FBXL2) complex, leading to its degradation by the proteasome. Ubiquitinated by E3 ubiquitin-protein ligase complex containing FBXO7; leading to repression of NF-kappa-B signaling.

The protein resides in the cytoplasm. The enzyme catalyses S-ubiquitinyl-[E2 ubiquitin-conjugating enzyme]-L-cysteine + [acceptor protein]-L-lysine = [E2 ubiquitin-conjugating enzyme]-L-cysteine + N(6)-ubiquitinyl-[acceptor protein]-L-lysine.. Its pathway is protein modification; protein ubiquitination. Has very low E3 ubiquitin ligase activity in the absence of sphingosine-1-phosphate. E3 ubiquitin ligase activity is strongly activated by cytoplasmic sphingosine-1-phosphate. Functionally, E3 ubiquitin-protein ligase that regulates activation of NF-kappa-B and JNK and plays a central role in the regulation of cell survival and apoptosis. Catalyzes 'Lys-63'-linked ubiquitination of target proteins, such as BIRC3, IKBKE, MLST8, RIPK1 and TICAM1. Is an essential constituent of several E3 ubiquitin-protein ligase complexes, where it promotes the ubiquitination of target proteins by bringing them into contact with other E3 ubiquitin ligases. Regulates BIRC2 and BIRC3 protein levels by inhibiting their autoubiquitination and subsequent degradation; this does not depend on the TRAF2 RING-type zinc finger domain. Plays a role in mediating activation of NF-kappa-B by EIF2AK2/PKR. In complex with BIRC2 or BIRC3, promotes ubiquitination of IKBKE. Acts as a regulator of mTORC1 and mTORC2 assembly by mediating 'Lys-63'-linked ubiquitination of MLST8, thereby inhibiting formation of the mTORC2 complex, while facilitating assembly of the mTORC1 complex. Required for normal antibody isotype switching from IgM to IgG. This is TNF receptor-associated factor 2 from Homo sapiens (Human).